The primary structure comprises 416 residues: Probable glucan 1,3-beta-glucosidase A (416 aa).

An N-terminal signal peptide occupies residues 1 to 21 (MLYNLSKAVLALSVLAASADA). The active-site Proton donor is Glu209. Intrachain disulfides connect Cys290-Cys415 and Cys316-Cys341. Glu308 acts as the Nucleophile in catalysis.

It belongs to the glycosyl hydrolase 5 (cellulase A) family. As to quaternary structure, monomer. Requires Mn(2+) as cofactor.

It localises to the secreted. The enzyme catalyses Successive hydrolysis of beta-D-glucose units from the non-reducing ends of (1-&gt;3)-beta-D-glucans, releasing alpha-glucose.. Its function is as follows. Beta-glucanases participate in the metabolism of beta-glucan, the main structural component of the cell wall. It could also function biosynthetically as a transglycosylase. The sequence is that of Probable glucan 1,3-beta-glucosidase A (exgA) from Aspergillus terreus (strain NIH 2624 / FGSC A1156).